Here is a 432-residue protein sequence, read N- to C-terminus: MTKTETINLRGPLKGEFEVPGDKSMTHRAIMLSSLAQGQSVITKPLLAEDCLRTMKIFELLGVNFDIKDDKVFVDSPGYQNFKTPHQSLYTGNSGTTTRIMAGLLSGIGIQSVLSGDESIGKRPMNRVIDPLKEMGASITGIENNYTPLVINPSDIQGIDYKMPVASAQVKSAILFASLFSKTASTITEIGITRNHTETMFEHYNIPLKINGNVIQTIPDAITSIKVKDFTVPGDISSAAFFIVAALITPGSDITIHNVGMNSTRSGIIDIVKEMKGNIEIINQTNTSEPTASIRIQYTPDLQPAELSGELITRAIDEIPIVALLCTQANGSSVIKDAEELKFKETNRIETTSDELGLLGFEVHPTDDGFIIHPSKFEHAASVSSYTDHRIGMTLAIASLLSDETLAIRNFDSVNTSFPEFLPLLKSISQKG.

3 residues coordinate 3-phosphoshikimate: Lys23, Ser24, and Arg28. Lys23 contributes to the phosphoenolpyruvate binding site. Phosphoenolpyruvate is bound by residues Gly95 and Arg123. 3-phosphoshikimate-binding residues include Ser167, Gln169, Asp317, and Lys344. A phosphoenolpyruvate-binding site is contributed by Gln169. Catalysis depends on Asp317, which acts as the Proton acceptor. Phosphoenolpyruvate contacts are provided by Arg348 and Arg390.

The protein belongs to the EPSP synthase family. In terms of assembly, monomer.

It is found in the cytoplasm. The catalysed reaction is 3-phosphoshikimate + phosphoenolpyruvate = 5-O-(1-carboxyvinyl)-3-phosphoshikimate + phosphate. It participates in metabolic intermediate biosynthesis; chorismate biosynthesis; chorismate from D-erythrose 4-phosphate and phosphoenolpyruvate: step 6/7. In terms of biological role, catalyzes the transfer of the enolpyruvyl moiety of phosphoenolpyruvate (PEP) to the 5-hydroxyl of shikimate-3-phosphate (S3P) to produce enolpyruvyl shikimate-3-phosphate and inorganic phosphate. The protein is 3-phosphoshikimate 1-carboxyvinyltransferase of Staphylococcus carnosus (strain TM300).